The chain runs to 212 residues: Abscisic acid receptor PYL10 (212 aa).

The START-like stretch occupies residues 34–191; that stretch reads YAVGPGQCSS…NLQKLKSVSE (158 aa). Abscisate is bound by residues K70, 107–112, 134–140, and E156; these read ASTSTE and RLRNYRS. The short motif at 103 to 107 is the Gate loop element; sequence SGLPA. Positions 133 to 135 match the Latch loop motif; the sequence is HRL.

This sequence belongs to the PYR/PYL/RCAR abscisic acid intracellular receptor family. In terms of assembly, homodimer. Interacts with PP2C53. Binding to PP2C53 is dependent on the presence of abscisic acid (ABA). Interacts with PP2C50. Binding to PP2C50 is dependent on the presence of ABA.

The protein localises to the cytoplasm. The protein resides in the cytosol. It is found in the nucleus. In terms of biological role, inhibits the protein phosphatases PP2C06 and PP2C09 when activated by abscisic acid (ABA). Together with PP2C53, SAPK8 and SAPK10, may form an ABA signaling module involved in stress response. This is Abscisic acid receptor PYL10 from Oryza sativa subsp. japonica (Rice).